We begin with the raw amino-acid sequence, 184 residues long: MNWRSEHIWIEFITGSRKTSNFFWACILFLGSLGFLVVGTSSYLGRNLISVFPSQQISFFPQGIVMSFYGIAGLFISSYLWSTILWNVGSGYDRFDRKEGIVCIFRWGFPGKNRRIVLRFLMSDVQSIRVEVKEGLYTRRVLYMEVRGQGTIPLTRTDENLTPREMEQKAAELAYFLRVPIEGF.

2 helical membrane-spanning segments follow: residues 22 to 42 and 57 to 77; these read FFWACILFLGSLGFLVVGTSS and ISFFPQGIVMSFYGIAGLFIS.

It belongs to the Ycf4 family.

It is found in the plastid. Its subcellular location is the chloroplast thylakoid membrane. Functionally, seems to be required for the assembly of the photosystem I complex. The chain is Photosystem I assembly protein Ycf4 from Lemna minor (Common duckweed).